Here is a 483-residue protein sequence, read N- to C-terminus: Cyclic AMP-dependent transcription factor ATF-7 (483 aa).

A transactivation domain region spans residues 1-285 (MGDDRPFVCN…GMVVGSASTM (285 aa)). The C2H2-type zinc-finger motif lies at 7 to 31 (FVCNAPGCGQRFTNEDHLAVHKHKH). T51 is modified (phosphothreonine; by MAPK11). 2 positions are modified to phosphothreonine: T53 and T101. K107 participates in a covalent cross-link: Glycyl lysine isopeptide (Lys-Gly) (interchain with G-Cter in SUMO1). Disordered stretches follow at residues 110–148 (EPVE…TPTP) and 299–345 (HPDA…NRAA). 2 stretches are compositionally biased toward low complexity: residues 114 to 126 (VDSS…ASSP) and 307 to 320 (QPQV…PSTG). The segment covering 326–343 (TVDEDPDERRQRFLERNR) has biased composition (basic and acidic residues). One can recognise a bZIP domain in the interval 332–395 (DERRQRFLER…AQLKQLLLAH (64 aa)). The basic motif stretch occupies residues 334–354 (RRQRFLERNRAAASRCRQKRK). Positions 360-388 (LEKKAEELTSQNIQLSNEVTLLRNEVAQL) are leucine-zipper. Disordered regions lie at residues 407–440 (TQGY…SNGL) and 464–483 (LSMP…SAGR). Phosphoserine occurs at positions 413 and 423. Residues 429 to 440 (QHSSATAPSNGL) show a composition bias toward polar residues.

The protein belongs to the bZIP family. In terms of assembly, homodimer; binds DNA as homodimer. Heterodimer; heterodimerizes with other members of ATF family and with JUN family members. Interacts with JNK2; the interaction does not phosphorylate ATF7 but acts as a docking site for other ATF-associated partners such as JUN family members. Interacts (via its transactivation domain) with TAF12 (isoforms TAFII15 and TAFII20); the interaction potentiates the transactivation activity (isoform TAFII20 only) and is inhibited by ATF7 sumoylation. Interacts with TAF4; the interaction inhibits the TAF12-dependent transactivation. Interacts with MAPK9; the interaction does not phosphorylate ATF7 but acts as a docking site for ATF7-associated partners such as JUN. Interacts with Ku complex components XRCC6 and XRCC7. Interacts with TERT. In terms of processing, on EGF stimulation, phosphorylated first on Thr-53 allowing subsequent phosphorylation on Thr-51. This latter phosphorylation prevents sumoylation, increases binding to TAF12 and enhances transcriptional activity. Social isolation stress as well as TNF-alpha also induce the phosphorylation of ATF7. Phosphorylated in proliferating colonic and small intestinal epithelial cells. Sumoylation delays nuclear localization and inhibits transactivation activity through preventing binding to TAF12. RANBP2 appears to be the specific E3 ligase.

The protein resides in the nucleus. The protein localises to the nucleoplasm. Its subcellular location is the chromosome. It is found in the telomere. Stress-responsive chromatin regulator that plays a role in various biological processes including innate immunological memory, adipocyte differentiation or telomerase regulation. In absence of stress, contributes to the formation of heterochromatin and heterochromatin-like structure by recruiting histone H3K9 tri- and di-methyltransferases thus silencing the transcription of target genes such as STAT1 in adipocytes, or genes involved in innate immunity in macrophages and adipocytes. Stress induces ATF7 phosphorylation that disrupts interactions with histone methyltransferase and enhances the association with coactivators containing histone acetyltransferase and/or histone demethylase, leading to disruption of the heterochromatin-like structure and subsequently transcriptional activation. In response to TNF-alpha, which is induced by various stresses, phosphorylated ATF7 and telomerase are released from telomeres leading to telomere shortening. Plays also a role in maintaining epithelial regenerative capacity and protecting against cell death during intestinal epithelial damage and repair. In Pongo abelii (Sumatran orangutan), this protein is Cyclic AMP-dependent transcription factor ATF-7 (ATF7).